Here is a 361-residue protein sequence, read N- to C-terminus: Phospho-N-acetylmuramoyl-pentapeptide-transferase (361 aa).

10 consecutive transmembrane segments (helical) span residues 25–45, 73–93, 97–117, 134–154, 168–188, 200–220, 237–257, 264–284, 289–309, and 338–358; these read RTVLAALTALIISFIVGPAMI, TMGGALILVSIAITTLLWADL, YVWIVLITTLGFGMIGWVDDY, LFWQSAIAILVALYLVLTAEL, VAVPLGVTGFVALTYFVIVGT, GLAIMPTVMISSALAIFSYVA, AGELAVFCGALAGAGLAFLWF, VFMGDVGALALGAALGIVTVI, IVMLIMGGVFVVETLSVMLQV, and QVVVRFWIITMMLVLFGLSSL.

It belongs to the glycosyltransferase 4 family. MraY subfamily. It depends on Mg(2+) as a cofactor.

It is found in the cell inner membrane. The catalysed reaction is UDP-N-acetyl-alpha-D-muramoyl-L-alanyl-gamma-D-glutamyl-meso-2,6-diaminopimeloyl-D-alanyl-D-alanine + di-trans,octa-cis-undecaprenyl phosphate = di-trans,octa-cis-undecaprenyl diphospho-N-acetyl-alpha-D-muramoyl-L-alanyl-D-glutamyl-meso-2,6-diaminopimeloyl-D-alanyl-D-alanine + UMP. Its pathway is cell wall biogenesis; peptidoglycan biosynthesis. In terms of biological role, catalyzes the initial step of the lipid cycle reactions in the biosynthesis of the cell wall peptidoglycan: transfers peptidoglycan precursor phospho-MurNAc-pentapeptide from UDP-MurNAc-pentapeptide onto the lipid carrier undecaprenyl phosphate, yielding undecaprenyl-pyrophosphoryl-MurNAc-pentapeptide, known as lipid I. This is Phospho-N-acetylmuramoyl-pentapeptide-transferase from Nitrosospira multiformis (strain ATCC 25196 / NCIMB 11849 / C 71).